Consider the following 296-residue polypeptide: Cbb3-type cytochrome c oxidase subunit CcoP (296 aa).

The Cytoplasmic portion of the chain corresponds to M1 to K31. Residues W32–P52 traverse the membrane as a helical segment. Over A53–K296 the chain is Periplasmic. Cytochrome c domains lie at F108–N200 and G207–G293. Heme c is bound by residues C121, C124, H125, M175, C220, C223, H224, and M270.

This sequence belongs to the CcoP / FixP family. Component of the cbb3-type cytochrome c oxidase at least composed of CcoN, CcoO, CcoQ and CcoP. The cofactor is heme c.

It is found in the cell inner membrane. Its pathway is energy metabolism; oxidative phosphorylation. Functionally, C-type cytochrome. Part of the cbb3-type cytochrome c oxidase complex. CcoP subunit is required for transferring electrons from donor cytochrome c via its heme groups to CcoO subunit. From there, electrons are shuttled to the catalytic binuclear center of CcoN subunit where oxygen reduction takes place. The complex also functions as a proton pump. The polypeptide is Cbb3-type cytochrome c oxidase subunit CcoP (Azospirillum sp. (strain B510)).